A 643-amino-acid polypeptide reads, in one-letter code: Threonine--tRNA ligase (643 aa).

The TGS domain occupies 1–61 (MPIITLPDGS…EQDATLEIIT (61 aa)). Residues 243-534 (DHRKIGKALD…ITEEYAGFFP (292 aa)) are catalytic. Zn(2+) is bound by residues cysteine 334, histidine 385, and histidine 511.

This sequence belongs to the class-II aminoacyl-tRNA synthetase family. As to quaternary structure, homodimer. Zn(2+) serves as cofactor.

It localises to the cytoplasm. It carries out the reaction tRNA(Thr) + L-threonine + ATP = L-threonyl-tRNA(Thr) + AMP + diphosphate + H(+). Functionally, catalyzes the attachment of threonine to tRNA(Thr) in a two-step reaction: L-threonine is first activated by ATP to form Thr-AMP and then transferred to the acceptor end of tRNA(Thr). Also edits incorrectly charged L-seryl-tRNA(Thr). The polypeptide is Threonine--tRNA ligase (Haemophilus influenzae (strain PittGG)).